The sequence spans 218 residues: Peptide methionine sulfoxide reductase A2 (218 aa).

Residues 1-19 show a composition bias toward polar residues; sequence MDSSLKTQEPQVVETSPSP. Residues 1-30 are disordered; that stretch reads MDSSLKTQEPQVVETSPSPVAQEPPQVADK. A Phosphoserine modification is found at Ser-205.

It belongs to the MsrA Met sulfoxide reductase family.

The protein resides in the cytoplasm. Its subcellular location is the cytosol. It carries out the reaction L-methionyl-[protein] + [thioredoxin]-disulfide + H2O = L-methionyl-(S)-S-oxide-[protein] + [thioredoxin]-dithiol. The catalysed reaction is [thioredoxin]-disulfide + L-methionine + H2O = L-methionine (S)-S-oxide + [thioredoxin]-dithiol. Its activity is regulated as follows. Activated during dark in short day conditions. Catalyzes the reduction of methionine sulfoxide (MetSO) to methionine in proteins. Plays a protective role against oxidative stress by restoring activity to proteins that have been inactivated by methionine oxidation. Prevents cellular oxidative damage in long nights. MSRA family specifically reduces the MetSO S-enantiomer. This Arabidopsis thaliana (Mouse-ear cress) protein is Peptide methionine sulfoxide reductase A2 (MRSA2).